A 37-amino-acid polypeptide reads, in one-letter code: Mu-agatoxin-Aa1b (37 aa).

Intrachain disulfides connect cysteine 2/cysteine 18, cysteine 9/cysteine 23, cysteine 17/cysteine 33, and cysteine 25/cysteine 31. The residue at position 37 (serine 37) is a Serine amide.

Belongs to the neurotoxin 07 (Beta/delta-agtx) family. 01 (aga-2) subfamily. As to expression, expressed by the venom gland.

The protein localises to the secreted. Its function is as follows. Insecticidal neurotoxin that induces an irreversible spastic paralysis when injected into insects. Modifies presynaptic voltage-gated sodium channels (Nav), causing them to open at the normal resting potential of the nerve. This leads to spontaneous release of neurotransmitter and repetitive action potentials in motor neurons. This Agelenopsis aperta (North American funnel-web spider) protein is Mu-agatoxin-Aa1b.